The chain runs to 173 residues: Large ribosomal subunit protein uL10 (173 aa).

Belongs to the universal ribosomal protein uL10 family. In terms of assembly, part of the ribosomal stalk of the 50S ribosomal subunit. The N-terminus interacts with L11 and the large rRNA to form the base of the stalk. The C-terminus forms an elongated spine to which L12 dimers bind in a sequential fashion forming a multimeric L10(L12)X complex.

Its function is as follows. Forms part of the ribosomal stalk, playing a central role in the interaction of the ribosome with GTP-bound translation factors. This Chlorobaculum tepidum (strain ATCC 49652 / DSM 12025 / NBRC 103806 / TLS) (Chlorobium tepidum) protein is Large ribosomal subunit protein uL10.